We begin with the raw amino-acid sequence, 336 residues long: Vomeronasal type-1 receptor 102 (336 aa).

Topologically, residues 1 to 42 (MVGVQICQGMTSEILFFSLQPQFSNMMNKNSRLHIDSNIRNT) are extracellular. A helical transmembrane segment spans residues 43–63 (FFTEIGIGVSANSLLLLFNIF). At 64 to 75 (KFIHGQRSRLTD) the chain is on the cytoplasmic side. Residues 76-96 (LPIGLLSLINLLMLLIMACIA) form a helical membrane-spanning segment. At 97–120 (TDIFISCRRWDDIICKSLLYLYRT) the chain is on the extracellular side. Cys-111 and Cys-198 are oxidised to a cystine. Residues 121 to 140 (FRGLSLSTTCLLSVLQAIIL) form a helical membrane-spanning segment. At 141 to 157 (SPRSSCLAKYKHKPPHH) the chain is on the cytoplasmic side. Residues 158 to 178 (IFCAMLFLSVLYMFISSHLLL) traverse the membrane as a helical segment. At 179 to 213 (SIIATPNLTTNDFIHVSQSCSILPMSYLMQSMFST) the chain is on the extracellular side. Asn-185 carries an N-linked (GlcNAc...) asparagine glycan. A helical membrane pass occupies residues 214-234 (LLAIRNVFLISLIVLSTWYMV). The Cytoplasmic segment spans residues 235–264 (ALLCRHRKQTRHLQDTSLSRKASPEQRATR). Residues 265-285 (SILMLRSLFVLMSIFDSIVSC) traverse the membrane as a helical segment. Residues 286–296 (SRTMYLNDPTS) lie on the Extracellular side of the membrane. Residues 297-317 (YSIQLLVVHIYATVSPFVFMI) form a helical membrane-spanning segment. At 318–336 (TEKHIVNYLKSMYVRVLNV) the chain is on the cytoplasmic side.

It belongs to the G-protein coupled receptor 1 family. Expressed in 1-4% of neurons of the vomeronasal organ. Only one pheromone receptor gene may be expressed in a particular neuron. Not expressed in the main olfactory epithelium.

Its subcellular location is the cell membrane. Its function is as follows. Putative pheromone receptor implicated in the regulation of social as well as reproductive behavior. The polypeptide is Vomeronasal type-1 receptor 102 (Vom1r102) (Rattus norvegicus (Rat)).